Consider the following 165-residue polypeptide: Peptide methionine sulfoxide reductase MsrA (165 aa).

Cysteine 10 is a catalytic residue.

It belongs to the MsrA Met sulfoxide reductase family.

The catalysed reaction is L-methionyl-[protein] + [thioredoxin]-disulfide + H2O = L-methionyl-(S)-S-oxide-[protein] + [thioredoxin]-dithiol. It catalyses the reaction [thioredoxin]-disulfide + L-methionine + H2O = L-methionine (S)-S-oxide + [thioredoxin]-dithiol. Its function is as follows. Has an important function as a repair enzyme for proteins that have been inactivated by oxidation. Catalyzes the reversible oxidation-reduction of methionine sulfoxide in proteins to methionine. This chain is Peptide methionine sulfoxide reductase MsrA, found in Campylobacter jejuni (strain RM1221).